A 505-amino-acid chain; its full sequence is Cell division control protein 6 homolog B (505 aa).

The interval 37–72 (KRKMRSDSAAVSGNSVSTPKKLKSHLPSSVPNPGMS) is disordered. Polar residues predominate over residues 45–54 (AAVSGNSVST).

It belongs to the CDC6/cdc18 family.

Its subcellular location is the nucleus. In terms of biological role, may be involved in the initiation of DNA replication. The protein is Cell division control protein 6 homolog B of Arabidopsis thaliana (Mouse-ear cress).